Reading from the N-terminus, the 90-residue chain is DNA/RNA-binding protein Alba (90 aa).

Lysine 11 is modified (N6-acetyllysine).

The protein belongs to the histone-like Alba family. Post-translationally, acetylated. Acetylation at Lys-11 decreases DNA-binding affinity.

Its subcellular location is the cytoplasm. The protein resides in the chromosome. In terms of biological role, binds double-stranded DNA tightly but without sequence specificity. Involved in DNA compaction. The chain is DNA/RNA-binding protein Alba from Picrophilus torridus (strain ATCC 700027 / DSM 9790 / JCM 10055 / NBRC 100828 / KAW 2/3).